A 97-amino-acid polypeptide reads, in one-letter code: Mapk-regulated corepressor-interacting protein 1 (97 aa).

The interval 1 to 30 (MTSSPVSRVVYNGKRTSSPRSPPSSSEIFT) is disordered. 2 positions are modified to phosphoserine: serine 21 and serine 24. Threonine 30 is modified (phosphothreonine). Tyrosine 41 is subject to Phosphotyrosine. Lysine 79 is subject to N6-acetyllysine. The PXDLS motif signature appears at 80-84 (PIDLS).

It belongs to the MCRIP family. As to quaternary structure, interacts (unphosphorylated form, via the PXDLS motif) with CTBP1, competitively inhibiting CTBP-ZEB1 interaction. Interacts with CTBP2. Interacts with MCRIP2. Interacts with DDX6. In terms of processing, phosphorylation by MAPK3/1 (ERK1/2) regulates MCRIP1 binding to CTBP(s).

Its subcellular location is the nucleus. The protein resides in the cytoplasm. It localises to the stress granule. The phosphorylation status of MCRIP1 functions as a molecular switch to regulate epithelial-mesenchymal transition. Unphosphorylated MCRIP1 binds to and inhibits the transcriptional corepressor CTBP(s). When phosphorylated by MAPK/ERK, MCRIP1 releases CTBP(s) resulting in transcriptional silencing of the E-cadherin gene and induction of epithelial-mesenchymal transition. This is Mapk-regulated corepressor-interacting protein 1 from Homo sapiens (Human).